The sequence spans 413 residues: MTVNRPRGTRDFLPADTARRRYVESVMRNVVRNWGYSEIITPTFEHLDLFTLKSGEGIVGELYNFTDKGGRDMTLRPELTAPVMRLYVNELQPFPKPLKLFYFENCFRYERPQKGRFREFWQFGVELIGSGKSDSDAEVIALADALLKAVGIQGDMKLGNLAVIRTLLKGLEPEIVSKVMRLVDKKEYAGLESLLEEIGAEEQLKSDLFHLIHLEGKYILPKVKEIVGNIPELVGFEKTLKLLDAYGVDYSLDFGIARGLDYYTGMVFEVYAEGLGAQKQVCGGGSYQLIQLFGGGDVPSTGFGIGFDRIMEICPLVPPASKNLVLVSKPATHIEAVKVASELRNYLPVQIDLMERNFKAQFSYANTINADYVVIVGEKELEAGKLTLRDMVSGEQELLTLEEIIEKITGQQD.

It belongs to the class-II aminoacyl-tRNA synthetase family.

It is found in the cytoplasm. It catalyses the reaction tRNA(His) + L-histidine + ATP = L-histidyl-tRNA(His) + AMP + diphosphate + H(+). This chain is Histidine--tRNA ligase, found in Methanosarcina acetivorans (strain ATCC 35395 / DSM 2834 / JCM 12185 / C2A).